The sequence spans 430 residues: Serine--tRNA ligase (430 aa).

235–237 provides a ligand contact to L-serine; sequence TAE. ATP-binding positions include 266-268 and valine 282; that span reads RRE. Glutamate 289 lines the L-serine pocket. ATP is bound at residue 353–356; sequence EASS. Residue serine 389 coordinates L-serine.

Belongs to the class-II aminoacyl-tRNA synthetase family. Type-1 seryl-tRNA synthetase subfamily. In terms of assembly, homodimer. The tRNA molecule binds across the dimer.

It localises to the cytoplasm. It catalyses the reaction tRNA(Ser) + L-serine + ATP = L-seryl-tRNA(Ser) + AMP + diphosphate + H(+). The catalysed reaction is tRNA(Sec) + L-serine + ATP = L-seryl-tRNA(Sec) + AMP + diphosphate + H(+). It functions in the pathway aminoacyl-tRNA biosynthesis; selenocysteinyl-tRNA(Sec) biosynthesis; L-seryl-tRNA(Sec) from L-serine and tRNA(Sec): step 1/1. In terms of biological role, catalyzes the attachment of serine to tRNA(Ser). Is also able to aminoacylate tRNA(Sec) with serine, to form the misacylated tRNA L-seryl-tRNA(Sec), which will be further converted into selenocysteinyl-tRNA(Sec). The chain is Serine--tRNA ligase from Chlorobium luteolum (strain DSM 273 / BCRC 81028 / 2530) (Pelodictyon luteolum).